The sequence spans 313 residues: Aspartate carbamoyltransferase catalytic subunit (313 aa).

Residues R58 and T59 each contribute to the carbamoyl phosphate site. K86 is an L-aspartate binding site. Residues R108, H136, and Q139 each coordinate carbamoyl phosphate. L-aspartate is bound by residues R169 and R224. 2 residues coordinate carbamoyl phosphate: G265 and P266.

The protein belongs to the aspartate/ornithine carbamoyltransferase superfamily. ATCase family. In terms of assembly, heterododecamer (2C3:3R2) of six catalytic PyrB chains organized as two trimers (C3), and six regulatory PyrI chains organized as three dimers (R2).

It catalyses the reaction carbamoyl phosphate + L-aspartate = N-carbamoyl-L-aspartate + phosphate + H(+). Its pathway is pyrimidine metabolism; UMP biosynthesis via de novo pathway; (S)-dihydroorotate from bicarbonate: step 2/3. Functionally, catalyzes the condensation of carbamoyl phosphate and aspartate to form carbamoyl aspartate and inorganic phosphate, the committed step in the de novo pyrimidine nucleotide biosynthesis pathway. This is Aspartate carbamoyltransferase catalytic subunit from Natranaerobius thermophilus (strain ATCC BAA-1301 / DSM 18059 / JW/NM-WN-LF).